Here is a 453-residue protein sequence, read N- to C-terminus: tRNA-2-methylthio-N(6)-dimethylallyladenosine synthase (453 aa).

An MTTase N-terminal domain is found at 7-123 (GTYWITTFGC…LDTLLSQVEA (117 aa)). Positions 16, 52, 86, 158, 162, and 165 each coordinate [4Fe-4S] cluster. The 238-residue stretch at 144-381 (RDSSLCAWVN…NALVERKAKA (238 aa)) folds into the Radical SAM core domain. Residues 384 to 447 (QRYLGRVEEV…AFSLSGSAQA (64 aa)) form the TRAM domain.

The protein belongs to the methylthiotransferase family. MiaB subfamily. Monomer. Requires [4Fe-4S] cluster as cofactor.

It localises to the cytoplasm. It catalyses the reaction N(6)-dimethylallyladenosine(37) in tRNA + (sulfur carrier)-SH + AH2 + 2 S-adenosyl-L-methionine = 2-methylsulfanyl-N(6)-dimethylallyladenosine(37) in tRNA + (sulfur carrier)-H + 5'-deoxyadenosine + L-methionine + A + S-adenosyl-L-homocysteine + 2 H(+). Its function is as follows. Catalyzes the methylthiolation of N6-(dimethylallyl)adenosine (i(6)A), leading to the formation of 2-methylthio-N6-(dimethylallyl)adenosine (ms(2)i(6)A) at position 37 in tRNAs that read codons beginning with uridine. This chain is tRNA-2-methylthio-N(6)-dimethylallyladenosine synthase, found in Synechococcus sp. (strain RCC307).